Consider the following 507-residue polypeptide: ATP synthase subunit alpha (507 aa).

170-177 lines the ATP pocket; it reads GDRQTGKT.

The protein belongs to the ATPase alpha/beta chains family. As to quaternary structure, F-type ATPases have 2 components, CF(1) - the catalytic core - and CF(0) - the membrane proton channel. CF(1) has five subunits: alpha(3), beta(3), gamma(1), delta(1), epsilon(1). CF(0) has three main subunits: a(1), b(2) and c(9-12). The alpha and beta chains form an alternating ring which encloses part of the gamma chain. CF(1) is attached to CF(0) by a central stalk formed by the gamma and epsilon chains, while a peripheral stalk is formed by the delta and b chains.

Its subcellular location is the cell inner membrane. It carries out the reaction ATP + H2O + 4 H(+)(in) = ADP + phosphate + 5 H(+)(out). Its function is as follows. Produces ATP from ADP in the presence of a proton gradient across the membrane. The alpha chain is a regulatory subunit. This chain is ATP synthase subunit alpha, found in Fervidobacterium nodosum (strain ATCC 35602 / DSM 5306 / Rt17-B1).